The sequence spans 207 residues: Large ribosomal subunit protein uL4 (207 aa).

The interval 45 to 78 (RQGTHAVKNRSAVSGGGRKPWRQKGTGRARQGSI) is disordered.

The protein belongs to the universal ribosomal protein uL4 family. In terms of assembly, part of the 50S ribosomal subunit.

One of the primary rRNA binding proteins, this protein initially binds near the 5'-end of the 23S rRNA. It is important during the early stages of 50S assembly. It makes multiple contacts with different domains of the 23S rRNA in the assembled 50S subunit and ribosome. Functionally, forms part of the polypeptide exit tunnel. This is Large ribosomal subunit protein uL4 from Lacticaseibacillus paracasei (strain ATCC 334 / BCRC 17002 / CCUG 31169 / CIP 107868 / KCTC 3260 / NRRL B-441) (Lactobacillus paracasei).